The sequence spans 522 residues: MAAATAADVAEDTASVYSGKLTLYVFLTCGVAATGGLIIGYDIGISGGVTSMDTFLGKFFPSVLHQEQTAQGTSQYCKFNSQPLTAFTSSLYLAALVASFFVASFTRALGRKWSMFGGGVSFLAGATLNGAARNVAMLIVGRILLGIGVAFCGLSTPIYLSEMAPPRLRGMLNIGLQLMITVGIFSANLVNYGAAKIRGGWGWRVSLGLAAAPACVIAVGSLFLPDSPSSLINRGRHEQARRVLRRIRGTDEVDDEYGDLVAAASEIEVYSGCSARRRPWRDVLQRRYRPQLAMAVLIPFFQQLTGINVIMFYAPVLFKTIGLGGDASLMSAVITGLVNIVATFVSIATVDSLGRRKLLFQGGCQMLVSQVIIGTLIGVVFGTSGDGNISRALAVCIVVFICVYVAGFAWSWGPLGVLLPSEIFPLEVRPAGQSISVAVNMLCTFAVAEAFLPMLCHMRFGLFYFFSGWVLVMTLFVSAFLPETKGVPIEKMTVVWRTHWFWGRFYCNQDADAHVQVANSKV.

The Cytoplasmic portion of the chain corresponds to 1–24; the sequence is MAAATAADVAEDTASVYSGKLTLY. A helical membrane pass occupies residues 25 to 45; sequence VFLTCGVAATGGLIIGYDIGI. Residues 46 to 82 lie on the Extracellular side of the membrane; it reads SGGVTSMDTFLGKFFPSVLHQEQTAQGTSQYCKFNSQ. Residues 83-103 form a helical membrane-spanning segment; it reads PLTAFTSSLYLAALVASFFVA. The Cytoplasmic segment spans residues 104–111; sequence SFTRALGR. Residues 112–132 traverse the membrane as a helical segment; the sequence is KWSMFGGGVSFLAGATLNGAA. Residues 133–134 lie on the Extracellular side of the membrane; sequence RN. A helical transmembrane segment spans residues 135-155; the sequence is VAMLIVGRILLGIGVAFCGLS. At 156 to 169 the chain is on the cytoplasmic side; sequence TPIYLSEMAPPRLR. A helical transmembrane segment spans residues 170 to 190; the sequence is GMLNIGLQLMITVGIFSANLV. The Extracellular segment spans residues 191–204; that stretch reads NYGAAKIRGGWGWR. The chain crosses the membrane as a helical span at residues 205 to 225; it reads VSLGLAAAPACVIAVGSLFLP. The Cytoplasmic portion of the chain corresponds to 226–291; that stretch reads DSPSSLINRG…DVLQRRYRPQ (66 aa). The chain crosses the membrane as a helical span at residues 292–312; that stretch reads LAMAVLIPFFQQLTGINVIMF. At 313 to 329 the chain is on the extracellular side; that stretch reads YAPVLFKTIGLGGDASL. The helical transmembrane segment at 330 to 350 threads the bilayer; the sequence is MSAVITGLVNIVATFVSIATV. Residues 351-361 are Cytoplasmic-facing; the sequence is DSLGRRKLLFQ. A helical membrane pass occupies residues 362-382; it reads GGCQMLVSQVIIGTLIGVVFG. Residues 383–391 are Extracellular-facing; it reads TSGDGNISR. Residues 392–412 form a helical membrane-spanning segment; that stretch reads ALAVCIVVFICVYVAGFAWSW. The Cytoplasmic portion of the chain corresponds to 413 to 434; it reads GPLGVLLPSEIFPLEVRPAGQS. Residues 435 to 455 traverse the membrane as a helical segment; the sequence is ISVAVNMLCTFAVAEAFLPML. Residues 456-459 are Extracellular-facing; sequence CHMR. Residues 460 to 480 traverse the membrane as a helical segment; that stretch reads FGLFYFFSGWVLVMTLFVSAF. Topologically, residues 481-522 are cytoplasmic; sequence LPETKGVPIEKMTVVWRTHWFWGRFYCNQDADAHVQVANSKV.

It belongs to the major facilitator superfamily. Sugar transporter (TC 2.A.1.1) family.

It is found in the membrane. Functionally, mediates active uptake of hexoses by sugar:proton symport. Can transport glucose. In Oryza sativa subsp. japonica (Rice), this protein is Sugar transport protein MST2.